Reading from the N-terminus, the 161-residue chain is Transcription elongation factor GreB (161 aa).

The protein belongs to the GreA/GreB family. GreB subfamily.

In terms of biological role, necessary for efficient RNA polymerase transcription elongation past template-encoded arresting sites. The arresting sites in DNA have the property of trapping a certain fraction of elongating RNA polymerases that pass through, resulting in locked ternary complexes. Cleavage of the nascent transcript by cleavage factors such as GreA or GreB allows the resumption of elongation from the new 3'terminus. GreB releases sequences of up to 9 nucleotides in length. The sequence is that of Transcription elongation factor GreB from Vibrio cholerae serotype O1 (strain ATCC 39315 / El Tor Inaba N16961).